The chain runs to 82 residues: MKDMQPFTPVKSYTPFHSRFDPCPPIGKKYYRTPPNLYMTFQPEHMEQFSPMEALRKGTLWKDLYDFYENPYRGGDAHGKKG.

In terms of biological role, the cotJ operon proteins affect spore coat composition. They are either required for the normal formation of the inner layers of the coat or are themselves structural components of the coat. The chain is Protein CotJA (cotJA) from Bacillus subtilis (strain 168).